Reading from the N-terminus, the 368-residue chain is Phospho-N-acetylmuramoyl-pentapeptide-transferase (368 aa).

9 helical membrane passes run Ala-30–Leu-50, Leu-72–Ser-92, His-98–Tyr-118, Val-139–Met-159, Leu-170–Ser-190, Ala-208–Thr-228, Gly-238–Phe-258, Glu-264–Ile-286, and Lys-345–Leu-365.

Belongs to the glycosyltransferase 4 family. MraY subfamily. Mg(2+) serves as cofactor.

The protein localises to the cell inner membrane. It carries out the reaction UDP-N-acetyl-alpha-D-muramoyl-L-alanyl-gamma-D-glutamyl-meso-2,6-diaminopimeloyl-D-alanyl-D-alanine + di-trans,octa-cis-undecaprenyl phosphate = di-trans,octa-cis-undecaprenyl diphospho-N-acetyl-alpha-D-muramoyl-L-alanyl-D-glutamyl-meso-2,6-diaminopimeloyl-D-alanyl-D-alanine + UMP. It participates in cell wall biogenesis; peptidoglycan biosynthesis. In terms of biological role, catalyzes the initial step of the lipid cycle reactions in the biosynthesis of the cell wall peptidoglycan: transfers peptidoglycan precursor phospho-MurNAc-pentapeptide from UDP-MurNAc-pentapeptide onto the lipid carrier undecaprenyl phosphate, yielding undecaprenyl-pyrophosphoryl-MurNAc-pentapeptide, known as lipid I. The polypeptide is Phospho-N-acetylmuramoyl-pentapeptide-transferase (Chlorobium luteolum (strain DSM 273 / BCRC 81028 / 2530) (Pelodictyon luteolum)).